The chain runs to 183 residues: Ferritin heavy chain (183 aa).

Met-1 carries the post-translational modification N-acetylmethionine. Position 2 is an N-acetylthreonine; in Ferritin heavy chain, N-terminally processed (Thr-2). In terms of domain architecture, Ferritin-like diiron spans 11-160 (QNYHQDSEAA…DHVTNLRKMG (150 aa)). Glu-28, Glu-63, His-66, Glu-108, and Gln-142 together coordinate Fe cation. Phosphoserine occurs at positions 179 and 183.

It belongs to the ferritin family. Oligomer of 24 subunits. There are two types of subunits: L (light) chain and H (heavy) chain. The major chain can be light or heavy, depending on the species and tissue type. In the human liver, the heavy chain is predominant. The functional molecule forms a roughly spherical shell with a diameter of 12 nm and contains a central cavity into which the insoluble mineral iron core is deposited. Interacts with NCOA4; NCOA4 promotes targeting of the iron-binding ferritin complex to autolysosomes following starvation or iron depletion. In terms of tissue distribution, expressed in the liver.

The protein resides in the cytoplasm. Its subcellular location is the lysosome. The protein localises to the cytoplasmic vesicle. It is found in the autophagosome. It catalyses the reaction 4 Fe(2+) + O2 + 4 H(+) = 4 Fe(3+) + 2 H2O. Functionally, stores iron in a soluble, non-toxic, readily available form. Important for iron homeostasis. Has ferroxidase activity. Iron is taken up in the ferrous form and deposited as ferric hydroxides after oxidation. Also plays a role in delivery of iron to cells. Mediates iron uptake in capsule cells of the developing kidney. Delivery to lysosomes is mediated by the cargo receptor NCOA4 for autophagic degradation and release of iron. This Homo sapiens (Human) protein is Ferritin heavy chain (FTH1).